Consider the following 995-residue polypeptide: Integrator complex subunit 8 (995 aa).

Residue Thr18 is modified to Phosphothreonine. The WFEF motif signature appears at 24-29 (WFEFLL). 4 TPR repeats span residues 250–288 (CQVC…LAEI), 320–356 (SQQL…TLPV), 570–603 (VYIL…VTEF), and 833–866 (HAWL…CSDF).

The protein belongs to the Integrator subunit 8 family. Component of the Integrator complex, composed of core subunits INTS1, INTS2, INTS3, INTS4, INTS5, INTS6, INTS7, INTS8, INTS9/RC74, INTS10, INTS11/CPSF3L, INTS12, INTS13, INTS14 and INTS15. The core complex associates with protein phosphatase 2A subunits PPP2CA and PPP2R1A, to form the Integrator-PP2A (INTAC) complex.

Its subcellular location is the nucleus. The protein localises to the chromosome. Component of the integrator complex, a multiprotein complex that terminates RNA polymerase II (Pol II) transcription in the promoter-proximal region of genes. The integrator complex provides a quality checkpoint during transcription elongation by driving premature transcription termination of transcripts that are unfavorably configured for transcriptional elongation: the complex terminates transcription by (1) catalyzing dephosphorylation of the C-terminal domain (CTD) of Pol II subunit POLR2A/RPB1 and SUPT5H/SPT5, (2) degrading the exiting nascent RNA transcript via endonuclease activity and (3) promoting the release of Pol II from bound DNA. The integrator complex is also involved in terminating the synthesis of non-coding Pol II transcripts, such as enhancer RNAs (eRNAs), small nuclear RNAs (snRNAs), telomerase RNAs and long non-coding RNAs (lncRNAs). Within the integrator complex, INTS8 is required for the recruitment of protein phosphatase 2A (PP2A) to transcription pause-release checkpoint. This chain is Integrator complex subunit 8 (Ints8), found in Mus musculus (Mouse).